The primary structure comprises 141 residues: Small ribosomal subunit protein bS6 (141 aa).

Residues 97-141 (TGQSEMLKAEENRSERRERRDRPEHSDSADGDDGDNSDVSDNADE) are disordered. Over residues 103-124 (LKAEENRSERRERRDRPEHSDS) the composition is skewed to basic and acidic residues. Over residues 125–141 (ADGDDGDNSDVSDNADE) the composition is skewed to acidic residues.

Belongs to the bacterial ribosomal protein bS6 family.

Functionally, binds together with bS18 to 16S ribosomal RNA. The protein is Small ribosomal subunit protein bS6 of Pseudomonas syringae pv. syringae (strain B728a).